Consider the following 238-residue polypeptide: Small ribosomal subunit protein uS3 (238 aa).

Residues 39–107 (MREFIHDYAK…ELHLNIVEIR (69 aa)) form the KH type-2 domain. The segment covering 212 to 222 (PQAHDRRHSEA) has biased composition (basic and acidic residues). The disordered stretch occupies residues 212-238 (PQAHDRRHSEAQEGAAPRPPRRDRERA).

Belongs to the universal ribosomal protein uS3 family. Part of the 30S ribosomal subunit. Forms a tight complex with proteins S10 and S14.

In terms of biological role, binds the lower part of the 30S subunit head. Binds mRNA in the 70S ribosome, positioning it for translation. The protein is Small ribosomal subunit protein uS3 of Cereibacter sphaeroides (strain ATCC 17025 / ATH 2.4.3) (Rhodobacter sphaeroides).